We begin with the raw amino-acid sequence, 202 residues long: MTRTARIERQTSESKVLVEVDLDGTGRHDVSTGVGFYDHMLTAFARHALVDLTVQTDGDTHIDAHHTVEDTAIALGQALRQALGDKRGIRRFGDATVPLDEALVQAVVDVSGRPYCVHTGEPEGQQYVQLGGTTPAYLGSLTQHVFESIAFHGHFALHVRVLAGREPHHIVETQFKAVARAFRDAVALDPRETGIPSTKGAL.

This sequence belongs to the imidazoleglycerol-phosphate dehydratase family.

It is found in the cytoplasm. The enzyme catalyses D-erythro-1-(imidazol-4-yl)glycerol 3-phosphate = 3-(imidazol-4-yl)-2-oxopropyl phosphate + H2O. The protein operates within amino-acid biosynthesis; L-histidine biosynthesis; L-histidine from 5-phospho-alpha-D-ribose 1-diphosphate: step 6/9. This is Imidazoleglycerol-phosphate dehydratase from Nocardioides sp. (strain ATCC BAA-499 / JS614).